Consider the following 259-residue polypeptide: Deoxyribose-phosphate aldolase (259 aa).

Residue D102 is the Proton donor/acceptor of the active site. The Schiff-base intermediate with acetaldehyde role is filled by K167. The Proton donor/acceptor role is filled by K201.

The protein belongs to the DeoC/FbaB aldolase family. DeoC type 2 subfamily.

It localises to the cytoplasm. It carries out the reaction 2-deoxy-D-ribose 5-phosphate = D-glyceraldehyde 3-phosphate + acetaldehyde. It participates in carbohydrate degradation; 2-deoxy-D-ribose 1-phosphate degradation; D-glyceraldehyde 3-phosphate and acetaldehyde from 2-deoxy-alpha-D-ribose 1-phosphate: step 2/2. Catalyzes a reversible aldol reaction between acetaldehyde and D-glyceraldehyde 3-phosphate to generate 2-deoxy-D-ribose 5-phosphate. This Salmonella dublin (strain CT_02021853) protein is Deoxyribose-phosphate aldolase.